The following is a 253-amino-acid chain: tRNA1(Val) (adenine(37)-N6)-methyltransferase (253 aa).

It belongs to the methyltransferase superfamily. tRNA (adenine-N(6)-)-methyltransferase family.

The protein resides in the cytoplasm. The enzyme catalyses adenosine(37) in tRNA1(Val) + S-adenosyl-L-methionine = N(6)-methyladenosine(37) in tRNA1(Val) + S-adenosyl-L-homocysteine + H(+). Functionally, specifically methylates the adenine in position 37 of tRNA(1)(Val) (anticodon cmo5UAC). The protein is tRNA1(Val) (adenine(37)-N6)-methyltransferase of Dickeya chrysanthemi (strain Ech1591) (Dickeya zeae (strain Ech1591)).